A 1616-amino-acid chain; its full sequence is Protein Shroom2 (1616 aa).

One can recognise a PDZ domain in the interval 26–108 (LVEVQLSGGA…TLKLVVKRRS (83 aa)). Disordered regions lie at residues 128–159 (ELAASPFTSTSGCPSWSGRHHASSSSHDLSSS) and 183–229 (HPSS…KADT). A compositionally biased stretch (low complexity) spans 150 to 159 (SSSSHDLSSS). 2 stretches are compositionally biased toward polar residues: residues 186 to 197 (SRLSVAKSNSSI) and 220 to 229 (PDHTLSKADT). Phosphoserine is present on S231. Residues 247 to 259 (QGGRQAQAAGDPQ) show a composition bias toward low complexity. Disordered regions lie at residues 247-475 (QGGR…SGWQ), 502-678 (GALE…PLAG), 695-790 (TSFK…SEDT), 802-869 (EETS…LPRR), 881-1100 (KEQR…PSPA), 1115-1184 (PSVF…LTDK), 1268-1302 (AEPEAPHRAQPAEPQPLGTQVPPEKDRCTSPPGLS), and 1363-1389 (QRRKLLPKIPSPRSTEERKEEPSVPAA). Positions 312-321 (SSPPPPPPPL) are enriched in pro residues. S313 and S325 each carry phosphoserine. Residues 343–356 (AAAAQHFTALAQAQ) are compositionally biased toward low complexity. The segment covering 358-370 (RGDRRPELTDRPW) has biased composition (basic and acidic residues). Positions 405–415 (SSRLQASLSSS) are enriched in low complexity. At S413 the chain carries Phosphoserine. In terms of domain architecture, ASD1 spans 684-773 (LKEAQARVLR…SEPEKMNEVG (90 aa)). 2 stretches are compositionally biased toward basic and acidic residues: residues 754–770 (FTAEQKLKSYSEPEKMN) and 821–830 (IPRDKPERPR). Residues 842–854 (WSRTTSLGDSLNA) are compositionally biased toward polar residues. A phosphoserine mark is found at S851, S897, S921, S922, and S924. T925 is modified (phosphothreonine). The span at 926–958 (DHYKQEASVELRRQAGDPGEPREELPSAVRAEE) shows a compositional bias: basic and acidic residues. A Phosphoserine modification is found at S974. A compositionally biased stretch (polar residues) spans 975–994 (PGSQQHPPSQKAPNPPTFSE). Phosphoserine occurs at positions 1036 and 1039. Residues 1068–1077 (PKREPRRYRA) are compositionally biased toward basic and acidic residues. Residues 1159-1176 (LRLQTATMETSRSPSPQF) show a composition bias toward polar residues. 3 positions are modified to phosphoserine: S1171, S1173, and S1297. An ASD2 domain is found at 1317–1611 (EELAREIVGK…QLKCLLDSLQ (295 aa)).

The protein belongs to the shroom family. Interacts with F-actin. As to expression, abundant in retina and melanoma; also in brain, placenta, lung, kidney and pancreas.

The protein resides in the apical cell membrane. It is found in the cell junction. Its subcellular location is the tight junction. The protein localises to the cytoplasm. It localises to the cytoskeleton. Its function is as follows. May be involved in endothelial cell morphology changes during cell spreading. In the retinal pigment epithelium, may regulate the biogenesis of melanosomes and promote their association with the apical cell surface by inducing gamma-tubulin redistribution. The protein is Protein Shroom2 (SHROOM2) of Homo sapiens (Human).